The following is a 106-amino-acid chain: Small ribosomal subunit protein uS17 (106 aa).

It belongs to the universal ribosomal protein uS17 family. As to quaternary structure, part of the 30S ribosomal subunit.

One of the primary rRNA binding proteins, it binds specifically to the 5'-end of 16S ribosomal RNA. In Methanosphaera stadtmanae (strain ATCC 43021 / DSM 3091 / JCM 11832 / MCB-3), this protein is Small ribosomal subunit protein uS17.